We begin with the raw amino-acid sequence, 173 residues long: Large ribosomal subunit protein uL16 (173 aa).

This sequence belongs to the universal ribosomal protein uL16 family.

This is Large ribosomal subunit protein uL16 from Methanococcus maripaludis (strain DSM 14266 / JCM 13030 / NBRC 101832 / S2 / LL).